A 101-amino-acid chain; its full sequence is Feather keratin Cos2-2 (101 aa).

Position 2 is an N-acetylserine (Ser2).

Belongs to the avian keratin family. In terms of assembly, the avian keratins (F-ker, S-ker, C-ker and B-ker) are a complex mixture of very similar polypeptides.

This chain is Feather keratin Cos2-2, found in Columba livia (Rock dove).